The chain runs to 555 residues: Glutamine--tRNA ligase (555 aa).

The 'HIGH' region motif lies at 34 to 44 (PEPNGYLHIGH). ATP is bound by residues 35 to 37 (EPN) and 41 to 47 (HIGHAKS). Residues Asp67 and Tyr212 each contribute to the L-glutamine site. ATP is bound by residues Thr231, 261 to 262 (RL), and 269 to 271 (MSK). The 'KMSKS' region motif lies at 268 to 272 (VMSKR). The segment at 317 to 324 (TKQDNTIE) is interaction with tRNA.

It belongs to the class-I aminoacyl-tRNA synthetase family. In terms of assembly, monomer.

Its subcellular location is the cytoplasm. It carries out the reaction tRNA(Gln) + L-glutamine + ATP = L-glutaminyl-tRNA(Gln) + AMP + diphosphate. The polypeptide is Glutamine--tRNA ligase (Salmonella choleraesuis (strain SC-B67)).